A 97-amino-acid polypeptide reads, in one-letter code: MSNISKETVEKVANLAKLEVSETEATAFAGQLGKIIELVEQLNTLDTNNVEPTSHAIDVSNVLREDVATKGLDRKEVLKNAPDQQDGMFKVPTIMEQ.

This sequence belongs to the GatC family. As to quaternary structure, heterotrimer of A, B and C subunits.

It carries out the reaction L-glutamyl-tRNA(Gln) + L-glutamine + ATP + H2O = L-glutaminyl-tRNA(Gln) + L-glutamate + ADP + phosphate + H(+). It catalyses the reaction L-aspartyl-tRNA(Asn) + L-glutamine + ATP + H2O = L-asparaginyl-tRNA(Asn) + L-glutamate + ADP + phosphate + 2 H(+). Functionally, allows the formation of correctly charged Asn-tRNA(Asn) or Gln-tRNA(Gln) through the transamidation of misacylated Asp-tRNA(Asn) or Glu-tRNA(Gln) in organisms which lack either or both of asparaginyl-tRNA or glutaminyl-tRNA synthetases. The reaction takes place in the presence of glutamine and ATP through an activated phospho-Asp-tRNA(Asn) or phospho-Glu-tRNA(Gln). This is Aspartyl/glutamyl-tRNA(Asn/Gln) amidotransferase subunit C from Listeria innocua serovar 6a (strain ATCC BAA-680 / CLIP 11262).